Reading from the N-terminus, the 102-residue chain is Small ribosomal subunit protein uS10 (102 aa).

It belongs to the universal ribosomal protein uS10 family. In terms of assembly, part of the 30S ribosomal subunit.

Its function is as follows. Involved in the binding of tRNA to the ribosomes. This is Small ribosomal subunit protein uS10 from Rhodopseudomonas palustris (strain HaA2).